Consider the following 205-residue polypeptide: Ribosome maturation factor RimP (205 aa).

This sequence belongs to the RimP family.

The protein localises to the cytoplasm. Functionally, required for maturation of 30S ribosomal subunits. The sequence is that of Ribosome maturation factor RimP from Sinorhizobium medicae (strain WSM419) (Ensifer medicae).